Consider the following 31-residue polypeptide: MPTLTSYFGFLLVALTITLVLFISLSKIRLI.

A helical membrane pass occupies residues 3–23; it reads TLTSYFGFLLVALTITLVLFI.

It belongs to the PetL family. In terms of assembly, the 4 large subunits of the cytochrome b6-f complex are cytochrome b6, subunit IV (17 kDa polypeptide, PetD), cytochrome f and the Rieske protein, while the 4 small subunits are PetG, PetL, PetM and PetN. The complex functions as a dimer.

Its subcellular location is the plastid. It localises to the chloroplast thylakoid membrane. Its function is as follows. Component of the cytochrome b6-f complex, which mediates electron transfer between photosystem II (PSII) and photosystem I (PSI), cyclic electron flow around PSI, and state transitions. PetL is important for photoautotrophic growth as well as for electron transfer efficiency and stability of the cytochrome b6-f complex. This is Cytochrome b6-f complex subunit 6 from Populus alba (White poplar).